The sequence spans 49 residues: Small, acid-soluble spore protein O (49 aa).

Residues 24–49 are disordered; it reads GYNEEFSNEPLTEAQRQNNKKRKKNQ.

This sequence belongs to the SspO family.

It is found in the spore core. This Geobacillus kaustophilus (strain HTA426) protein is Small, acid-soluble spore protein O.